The primary structure comprises 689 residues: DNA topoisomerase 1 (689 aa).

The Toprim domain occupies 3–113 (DNLVIVESPA…KENRVVFNEI (111 aa)). Glu9 and Asp82 together coordinate Mg(2+). One can recognise a Topo IA-type catalytic domain in the interval 129 to 557 (EMDLVDAQQA…FYNSFKQDVE (429 aa)). Positions 163–168 (SAGRVQ) are interaction with DNA. Tyr298 functions as the O-(5'-phospho-DNA)-tyrosine intermediate in the catalytic mechanism. C4-type zinc fingers lie at residues 577–603 (CEVC…FPDC), 617–645 (CPKC…YPEC), and 658–681 (CPKC…CSNC).

The protein belongs to the type IA topoisomerase family. As to quaternary structure, monomer. The cofactor is Mg(2+).

The enzyme catalyses ATP-independent breakage of single-stranded DNA, followed by passage and rejoining.. Functionally, releases the supercoiling and torsional tension of DNA, which is introduced during the DNA replication and transcription, by transiently cleaving and rejoining one strand of the DNA duplex. Introduces a single-strand break via transesterification at a target site in duplex DNA. The scissile phosphodiester is attacked by the catalytic tyrosine of the enzyme, resulting in the formation of a DNA-(5'-phosphotyrosyl)-enzyme intermediate and the expulsion of a 3'-OH DNA strand. The free DNA strand then undergoes passage around the unbroken strand, thus removing DNA supercoils. Finally, in the religation step, the DNA 3'-OH attacks the covalent intermediate to expel the active-site tyrosine and restore the DNA phosphodiester backbone. In Staphylococcus epidermidis (strain ATCC 35984 / DSM 28319 / BCRC 17069 / CCUG 31568 / BM 3577 / RP62A), this protein is DNA topoisomerase 1.